Here is a 1240-residue protein sequence, read N- to C-terminus: Selection and upkeep of intraepithelial T-cells protein 6 (1240 aa).

Residues 1–24 (MGTIGVPLTAHCVVLFLLQMVALS) form the signal peptide. The Extracellular segment spans residues 25 to 1086 (TEQFTVNGLE…CNKRNPFWKK (1062 aa)). Residues 26-141 (EQFTVNGLES…EEHIIEVKVT (116 aa)) enclose the Ig-like V-type domain. Cysteine 49 and cysteine 123 are oxidised to a cystine. The Ig-like C1-type domain occupies 142 to 231 (ATSSDIQILM…FVTHQEESIS (90 aa)). N-linked (GlcNAc...) asparagine glycans are attached at residues asparagine 155, asparagine 200, and asparagine 314. Cysteine 163 and cysteine 217 form a disulfide bridge. A helical transmembrane segment spans residues 1087–1107 (HALDLGISVFAIIVVTLIRHL). The Cytoplasmic segment spans residues 1108 to 1125 (NQREADQHFELDTLWSKD). Residues 1126–1146 (TSVILCVLIMFNNRLKALIYF) traverse the membrane as a helical segment. The Extracellular portion of the chain corresponds to 1147–1167 (RLYGYSPPGKTYKYIVNYILR). The helical transmembrane segment at 1168 to 1188 (FSQPLFFIVYSAIILVMHLQI) threads the bilayer. Topologically, residues 1189 to 1205 (QNTDSLFSLYNSWMVEM) are cytoplasmic. A helical transmembrane segment spans residues 1206-1226 (IMVLGLLLAIFNVKNIATALL). Over 1227–1240 (HLGRTTLRLFRIKD) the chain is Extracellular.

This sequence belongs to the SKINT family. In terms of tissue distribution, expressed in skin.

Its subcellular location is the membrane. Its function is as follows. May act by engaging a cell surface molecule on immature T-cells in the embryonic thymus. This is Selection and upkeep of intraepithelial T-cells protein 6 (Skint6) from Mus musculus (Mouse).